An 85-amino-acid chain; its full sequence is Antitoxin VapB31 (85 aa).

In terms of biological role, antitoxin component of a type II toxin-antitoxin (TA) system. Upon expression in M.smegmatis neutralizes the effect of cognate toxin VapC31. This chain is Antitoxin VapB31 (vapB31), found in Mycobacterium tuberculosis (strain ATCC 25618 / H37Rv).